Reading from the N-terminus, the 610-residue chain is tRNA uridine 5-carboxymethylaminomethyl modification enzyme MnmG (610 aa).

14 to 19 (GAGHAG) contributes to the FAD binding site. 274 to 288 (GPRYCPSIEDKIVKF) is a binding site for NAD(+).

The protein belongs to the MnmG family. In terms of assembly, homodimer. Heterotetramer of two MnmE and two MnmG subunits. Requires FAD as cofactor.

It is found in the cytoplasm. NAD-binding protein involved in the addition of a carboxymethylaminomethyl (cmnm) group at the wobble position (U34) of certain tRNAs, forming tRNA-cmnm(5)s(2)U34. This is tRNA uridine 5-carboxymethylaminomethyl modification enzyme MnmG from Chlamydia trachomatis serovar A (strain ATCC VR-571B / DSM 19440 / HAR-13).